The following is a 316-amino-acid chain: MNDVTEASLPKAIFLMGPTASGKTALAIALRKVLPVELISVDSALIYRGMDIGTAKPDAAELSAAPHRLLDILDPAEAYSAADFRRDALAAMADIVAAGRIPLLVGGTMLYFKALLEGLSPLPSADPEVRARIEQQAAEQGWNALHQQLQEIDPVAAARIHPNDPQRLSRALEVFFISGKTLTELTQTSGDALPYQVHQFAIAPASRELLHQRIEQRFHQMLASGFEAEVRALFARGDLHTDMPSIRCVGYRQMWSYLNGEIPYDEMVYRGVCATRQLAKRQVTWLRGWEGVHWLDSEQPEQALNKVLQVVGASQN.

Position 17 to 24 (17 to 24 (GPTASGKT)) interacts with ATP. 19–24 (TASGKT) contacts substrate. Interaction with substrate tRNA stretches follow at residues 42-45 (DSAL), 166-170 (QRLSR), and 247-252 (RCVGYR).

The protein belongs to the IPP transferase family. As to quaternary structure, monomer. The cofactor is Mg(2+).

The catalysed reaction is adenosine(37) in tRNA + dimethylallyl diphosphate = N(6)-dimethylallyladenosine(37) in tRNA + diphosphate. Its function is as follows. Catalyzes the transfer of a dimethylallyl group onto the adenine at position 37 in tRNAs that read codons beginning with uridine, leading to the formation of N6-(dimethylallyl)adenosine (i(6)A). This is tRNA dimethylallyltransferase from Klebsiella pneumoniae (strain 342).